Here is a 373-residue protein sequence, read N- to C-terminus: D-amino-acid oxidase 3 (373 aa).

The first 19 residues, 1–19, serve as a signal peptide directing secretion; that stretch reads MVKYDAVILGSGVLGLSIA. The FAD site is built by Ser11, Leu14, Asp35, Ala46, Ser47, Gly51, and Asn53. Position 57 (Phe57) interacts with anthranilate. A glycan (N-linked (GlcNAc...) asparagine) is linked at Asn180. Cysteines 214 and 271 form a disulfide. Tyr229, Tyr246, and Arg296 together coordinate anthranilate. Tyr229, Tyr246, and Arg296 together coordinate (R)-lactate. Arg296, Gly342, Gly345, Tyr346, and Gln347 together coordinate FAD. Residues 371-373 carry the Microbody targeting signal motif; that stretch reads AKL.

It belongs to the DAMOX/DASOX family. It depends on FAD as a cofactor.

It is found in the peroxisome matrix. It carries out the reaction a D-alpha-amino acid + O2 + H2O = a 2-oxocarboxylate + H2O2 + NH4(+). Catalyzes the oxidative deamination of D-amino acids with broad substrate specificity. Enables the organism to utilize D-amino acids as a source of nutrients. Enables the organism to utilize D-glutamate and D-methionine as a nitrogen source. Protects the organism from the toxicity of D-amino acids, including from D-glutamate. May play a role in its interaction with the host. The protein is D-amino-acid oxidase 3 of Cryptococcus neoformans var. grubii serotype A (strain H99 / ATCC 208821 / CBS 10515 / FGSC 9487) (Filobasidiella neoformans var. grubii).